The sequence spans 374 residues: Chaperone protein DnaJ (374 aa).

The 65-residue stretch at 4 to 68 folds into the J domain; it reads DYYDILGVSR…ETRARYDRFG (65 aa). Residues 133–215 form a CR-type zinc finger; sequence GGEKQIRITH…CGGNGQAQVT (83 aa). Zn(2+)-binding residues include Cys-146, Cys-149, Cys-163, Cys-166, Cys-189, Cys-192, Cys-203, and Cys-206. 4 CXXCXGXG motif repeats span residues 146–153, 163–170, 189–196, and 203–210; these read CTTCNGSG, CGTCGGAG, CPTCNGKG, and CETCGGNG.

Belongs to the DnaJ family. In terms of assembly, homodimer. Requires Zn(2+) as cofactor.

The protein resides in the cytoplasm. In terms of biological role, participates actively in the response to hyperosmotic and heat shock by preventing the aggregation of stress-denatured proteins and by disaggregating proteins, also in an autonomous, DnaK-independent fashion. Unfolded proteins bind initially to DnaJ; upon interaction with the DnaJ-bound protein, DnaK hydrolyzes its bound ATP, resulting in the formation of a stable complex. GrpE releases ADP from DnaK; ATP binding to DnaK triggers the release of the substrate protein, thus completing the reaction cycle. Several rounds of ATP-dependent interactions between DnaJ, DnaK and GrpE are required for fully efficient folding. Also involved, together with DnaK and GrpE, in the DNA replication of plasmids through activation of initiation proteins. This Cyanothece sp. (strain PCC 7425 / ATCC 29141) protein is Chaperone protein DnaJ.